We begin with the raw amino-acid sequence, 279 residues long: Tryptophan synthase alpha chain (279 aa).

Catalysis depends on proton acceptor residues Glu-50 and Asp-61.

This sequence belongs to the TrpA family. As to quaternary structure, tetramer of two alpha and two beta chains.

The catalysed reaction is (1S,2R)-1-C-(indol-3-yl)glycerol 3-phosphate + L-serine = D-glyceraldehyde 3-phosphate + L-tryptophan + H2O. Its pathway is amino-acid biosynthesis; L-tryptophan biosynthesis; L-tryptophan from chorismate: step 5/5. In terms of biological role, the alpha subunit is responsible for the aldol cleavage of indoleglycerol phosphate to indole and glyceraldehyde 3-phosphate. In Sinorhizobium medicae (strain WSM419) (Ensifer medicae), this protein is Tryptophan synthase alpha chain.